The chain runs to 287 residues: Nucleotide-binding protein VP2673 (287 aa).

An ATP-binding site is contributed by 8 to 15 (GHSGAGKS). GTP is bound at residue 56–59 (DIRN).

The protein belongs to the RapZ-like family.

Displays ATPase and GTPase activities. This is Nucleotide-binding protein VP2673 from Vibrio parahaemolyticus serotype O3:K6 (strain RIMD 2210633).